The primary structure comprises 227 residues: Cytochrome c oxidase subunit 2 (227 aa).

The Mitochondrial intermembrane portion of the chain corresponds to 1-14 (MAHPVQLGFQDAAS). Residues 15–45 (PIMEELLYFHDHTLMIMFLISSLVLYIISLM) form a helical membrane-spanning segment. Residues 46–59 (LTTKLTHTSTMDAQ) are Mitochondrial matrix-facing. Residues 60–87 (EVETVWTILPAAILILIALPSLRILYMM) traverse the membrane as a helical segment. Residues 88-227 (DEITSPSLTL…HFEEWLLFTL (140 aa)) lie on the Mitochondrial intermembrane side of the membrane. Cu cation-binding residues include histidine 161, cysteine 196, glutamate 198, cysteine 200, histidine 204, and methionine 207. Glutamate 198 is a Mg(2+) binding site.

Belongs to the cytochrome c oxidase subunit 2 family. In terms of assembly, component of the cytochrome c oxidase (complex IV, CIV), a multisubunit enzyme composed of 14 subunits. The complex is composed of a catalytic core of 3 subunits MT-CO1, MT-CO2 and MT-CO3, encoded in the mitochondrial DNA, and 11 supernumerary subunits COX4I, COX5A, COX5B, COX6A, COX6B, COX6C, COX7A, COX7B, COX7C, COX8 and NDUFA4, which are encoded in the nuclear genome. The complex exists as a monomer or a dimer and forms supercomplexes (SCs) in the inner mitochondrial membrane with NADH-ubiquinone oxidoreductase (complex I, CI) and ubiquinol-cytochrome c oxidoreductase (cytochrome b-c1 complex, complex III, CIII), resulting in different assemblies (supercomplex SCI(1)III(2)IV(1) and megacomplex MCI(2)III(2)IV(2)). Found in a complex with TMEM177, COA6, COX18, COX20, SCO1 and SCO2. Interacts with TMEM177 in a COX20-dependent manner. Interacts with COX20. Interacts with COX16. The cofactor is Cu cation.

Its subcellular location is the mitochondrion inner membrane. The catalysed reaction is 4 Fe(II)-[cytochrome c] + O2 + 8 H(+)(in) = 4 Fe(III)-[cytochrome c] + 2 H2O + 4 H(+)(out). In terms of biological role, component of the cytochrome c oxidase, the last enzyme in the mitochondrial electron transport chain which drives oxidative phosphorylation. The respiratory chain contains 3 multisubunit complexes succinate dehydrogenase (complex II, CII), ubiquinol-cytochrome c oxidoreductase (cytochrome b-c1 complex, complex III, CIII) and cytochrome c oxidase (complex IV, CIV), that cooperate to transfer electrons derived from NADH and succinate to molecular oxygen, creating an electrochemical gradient over the inner membrane that drives transmembrane transport and the ATP synthase. Cytochrome c oxidase is the component of the respiratory chain that catalyzes the reduction of oxygen to water. Electrons originating from reduced cytochrome c in the intermembrane space (IMS) are transferred via the dinuclear copper A center (CU(A)) of subunit 2 and heme A of subunit 1 to the active site in subunit 1, a binuclear center (BNC) formed by heme A3 and copper B (CU(B)). The BNC reduces molecular oxygen to 2 water molecules using 4 electrons from cytochrome c in the IMS and 4 protons from the mitochondrial matrix. This is Cytochrome c oxidase subunit 2 (MT-CO2) from Varecia variegata (Black-and-white ruffed lemur).